A 291-amino-acid chain; its full sequence is Putative transport permease ycf38 (291 aa).

6 helical membrane passes run 47–67 (ATLM…GGLF), 87–107 (SGII…PLMF), 135–155 (FMTC…LFMG), 165–185 (MIFG…SLAL), 195–215 (LLAF…ALAP), and 262–282 (ICLG…AYLV). The ABC transmembrane type-2 domain maps to 47–289 (ATLMAGIIQP…YLVSNILKAK (243 aa)).

It belongs to the ABC-2 integral membrane protein family.

Its subcellular location is the plastid. It localises to the chloroplast membrane. In Pyropia yezoensis (Susabi-nori), this protein is Putative transport permease ycf38 (ycf38).